The following is a 170-amino-acid chain: RNA pyrophosphohydrolase (170 aa).

In terms of domain architecture, Nudix hydrolase spans 9–162; the sequence is PYRPCAGIMV…KRAVYEKVVA (154 aa). Residues 50 to 71 carry the Nudix box motif; the sequence is GGIDDGERPLTAAIRELYEETG.

It belongs to the Nudix hydrolase family. RppH subfamily. A divalent metal cation serves as cofactor.

Functionally, accelerates the degradation of transcripts by removing pyrophosphate from the 5'-end of triphosphorylated RNA, leading to a more labile monophosphorylated state that can stimulate subsequent ribonuclease cleavage. This chain is RNA pyrophosphohydrolase, found in Agrobacterium fabrum (strain C58 / ATCC 33970) (Agrobacterium tumefaciens (strain C58)).